A 434-amino-acid chain; its full sequence is Perilipin-3 (434 aa).

The disordered stretch occupies residues 1 to 22; it reads MSADGAEADGSTQVTVEEPVQQ. Serine 2 carries the post-translational modification N-acetylserine. At serine 31 the chain carries Phosphoserine. The residue at position 65 (lysine 65) is an N6-acetyllysine. Residue serine 91 is modified to Phosphoserine. A Glycyl lysine isopeptide (Lys-Gly) (interchain with G-Cter in SUMO1) cross-link involves residue lysine 122. Phosphoserine is present on residues serine 130 and serine 148. Threonine 170 carries the phosphothreonine modification. Residues serine 175 and serine 179 each carry the phosphoserine modification. Residue threonine 216 is modified to Phosphothreonine. A phosphoserine mark is found at serine 217 and serine 241. The residue at position 251 (tyrosine 251) is a Phosphotyrosine. 2 coiled-coil regions span residues 252–280 and 353–377; these read EHSL…SLME and TNVK…SSIH.

This sequence belongs to the perilipin family. Homooligomer. Interacts with M6PR (via the cytoplasmic domain). Interacts with IGF2R (via the cytoplasmic domain). Phosphorylation at Tyr-251 by isoform 1 of CHKA (CHKalpha2) promotes dissociation from lipid droplets: dissociation is followed by recruitment of autophagosome machinery to lipid droplets and subsequent lipid droplet lipolysis.

It localises to the lipid droplet. The protein resides in the endosome membrane. The protein localises to the cytoplasm. Functionally, structural component of lipid droplets, which is required for the formation and maintenance of lipid storage droplets. Required for the transport of mannose 6-phosphate receptors (MPR) from endosomes to the trans-Golgi network. This Pongo abelii (Sumatran orangutan) protein is Perilipin-3 (PLIN3).